Consider the following 254-residue polypeptide: Imidazole glycerol phosphate synthase subunit HisF (254 aa).

Residues Asp-11 and Asp-130 contribute to the active site.

This sequence belongs to the HisA/HisF family. Heterodimer of HisH and HisF.

The protein resides in the cytoplasm. It catalyses the reaction 5-[(5-phospho-1-deoxy-D-ribulos-1-ylimino)methylamino]-1-(5-phospho-beta-D-ribosyl)imidazole-4-carboxamide + L-glutamine = D-erythro-1-(imidazol-4-yl)glycerol 3-phosphate + 5-amino-1-(5-phospho-beta-D-ribosyl)imidazole-4-carboxamide + L-glutamate + H(+). Its pathway is amino-acid biosynthesis; L-histidine biosynthesis; L-histidine from 5-phospho-alpha-D-ribose 1-diphosphate: step 5/9. IGPS catalyzes the conversion of PRFAR and glutamine to IGP, AICAR and glutamate. The HisF subunit catalyzes the cyclization activity that produces IGP and AICAR from PRFAR using the ammonia provided by the HisH subunit. This Chromobacterium violaceum (strain ATCC 12472 / DSM 30191 / JCM 1249 / CCUG 213 / NBRC 12614 / NCIMB 9131 / NCTC 9757 / MK) protein is Imidazole glycerol phosphate synthase subunit HisF.